The sequence spans 688 residues: Potassium-transporting ATPase ATP-binding subunit (688 aa).

Helical transmembrane passes span 37–57 (FIVY…LFGI), 65–85 (ILFI…AEAI), 219–239 (IALQ…TASL), and 262–282 (LALL…AIGI). Aspartate 313 acts as the 4-aspartylphosphate intermediate in catalysis. Residues aspartate 350, glutamate 354, 383–390 (FTAKTRMS), and lysine 401 contribute to the ATP site. Aspartate 524 and aspartate 528 together coordinate Mg(2+). The next 3 membrane-spanning stretches (helical) occupy residues 586-606 (IAND…GLFP), 622-642 (AILS…PLAL), and 668-688 (IIAP…LGIV).

It belongs to the cation transport ATPase (P-type) (TC 3.A.3) family. Type IA subfamily. In terms of assembly, the system is composed of three essential subunits: KdpA, KdpB and KdpC.

It is found in the cell membrane. The enzyme catalyses K(+)(out) + ATP + H2O = K(+)(in) + ADP + phosphate + H(+). Its function is as follows. Part of the high-affinity ATP-driven potassium transport (or Kdp) system, which catalyzes the hydrolysis of ATP coupled with the electrogenic transport of potassium into the cytoplasm. This subunit is responsible for energy coupling to the transport system and for the release of the potassium ions to the cytoplasm. The chain is Potassium-transporting ATPase ATP-binding subunit from Clostridium perfringens (strain ATCC 13124 / DSM 756 / JCM 1290 / NCIMB 6125 / NCTC 8237 / Type A).